A 172-amino-acid polypeptide reads, in one-letter code: MAAQTQRAVLAGGCFWGMEELIRRLPGVTATRVGYTGGDVPNATYRNHGTHAEAIEILFDPEATDYRALLEFFFQIHDPSTKNRQGNDIGLSYRSAIYYVDDEQKRIAEDTIADVDASGLWPGKVVTEVEPVGPFWEAEPEHQDYLQRYPDGYTCHFPRPGWRLPARSGSEG.

Residue Cys14 is part of the active site.

Belongs to the MsrA Met sulfoxide reductase family.

It carries out the reaction L-methionyl-[protein] + [thioredoxin]-disulfide + H2O = L-methionyl-(S)-S-oxide-[protein] + [thioredoxin]-dithiol. The enzyme catalyses [thioredoxin]-disulfide + L-methionine + H2O = L-methionine (S)-S-oxide + [thioredoxin]-dithiol. Functionally, has an important function as a repair enzyme for proteins that have been inactivated by oxidation. Catalyzes the reversible oxidation-reduction of methionine sulfoxide in proteins to methionine. The polypeptide is Peptide methionine sulfoxide reductase MsrA (Streptomyces coelicolor (strain ATCC BAA-471 / A3(2) / M145)).